Here is a 251-residue protein sequence, read N- to C-terminus: Ribosome maturation factor RimP (251 aa).

The segment at 198–251 is disordered; sequence NLGLEPPAAPHAKISEKTTKNTKPKKKPAPTNTKKHRLAAERARRGEIEPDEGD. The segment covering 217–234 has biased composition (basic residues); that stretch reads KNTKPKKKPAPTNTKKHR. The span at 235–245 shows a compositional bias: basic and acidic residues; it reads LAAERARRGEI.

The protein belongs to the RimP family.

It is found in the cytoplasm. Required for maturation of 30S ribosomal subunits. The chain is Ribosome maturation factor RimP from Bradyrhizobium diazoefficiens (strain JCM 10833 / BCRC 13528 / IAM 13628 / NBRC 14792 / USDA 110).